The sequence spans 288 residues: Bifunctional protein FolD (288 aa).

Residues 164–166 (GRS), S193, and I234 each bind NADP(+).

Belongs to the tetrahydrofolate dehydrogenase/cyclohydrolase family. In terms of assembly, homodimer.

The enzyme catalyses (6R)-5,10-methylene-5,6,7,8-tetrahydrofolate + NADP(+) = (6R)-5,10-methenyltetrahydrofolate + NADPH. It carries out the reaction (6R)-5,10-methenyltetrahydrofolate + H2O = (6R)-10-formyltetrahydrofolate + H(+). Its pathway is one-carbon metabolism; tetrahydrofolate interconversion. Catalyzes the oxidation of 5,10-methylenetetrahydrofolate to 5,10-methenyltetrahydrofolate and then the hydrolysis of 5,10-methenyltetrahydrofolate to 10-formyltetrahydrofolate. The sequence is that of Bifunctional protein FolD from Nitratidesulfovibrio vulgaris (strain DSM 19637 / Miyazaki F) (Desulfovibrio vulgaris).